Consider the following 517-residue polypeptide: Bifunctional purine biosynthesis protein PurH (517 aa).

The 146-residue stretch at 1 to 146 (MGRLVLLSVS…KNFAHLTVLC (146 aa)) folds into the MGS-like domain.

Belongs to the PurH family.

The enzyme catalyses (6R)-10-formyltetrahydrofolate + 5-amino-1-(5-phospho-beta-D-ribosyl)imidazole-4-carboxamide = 5-formamido-1-(5-phospho-D-ribosyl)imidazole-4-carboxamide + (6S)-5,6,7,8-tetrahydrofolate. It catalyses the reaction IMP + H2O = 5-formamido-1-(5-phospho-D-ribosyl)imidazole-4-carboxamide. The protein operates within purine metabolism; IMP biosynthesis via de novo pathway; 5-formamido-1-(5-phospho-D-ribosyl)imidazole-4-carboxamide from 5-amino-1-(5-phospho-D-ribosyl)imidazole-4-carboxamide (10-formyl THF route): step 1/1. Its pathway is purine metabolism; IMP biosynthesis via de novo pathway; IMP from 5-formamido-1-(5-phospho-D-ribosyl)imidazole-4-carboxamide: step 1/1. The chain is Bifunctional purine biosynthesis protein PurH from Gloeothece citriformis (strain PCC 7424) (Cyanothece sp. (strain PCC 7424)).